The following is a 640-amino-acid chain: Chaperone protein DnaK (640 aa).

At Thr196 the chain carries Phosphothreonine; by autocatalysis. 2 disordered regions span residues 510–530 (NDAK…ETKN) and 598–640 (AADA…DKDK).

Belongs to the heat shock protein 70 family.

Its function is as follows. Acts as a chaperone. In Prosthecochloris aestuarii (strain DSM 271 / SK 413), this protein is Chaperone protein DnaK.